The sequence spans 378 residues: P2X receptor A (378 aa).

Residues 1-27 (MGFSFDWDDIFQYSTVKIVRIRDRRLG) are Cytoplasmic-facing. The helical transmembrane segment at 28–48 (ILHLSFLVGIVAYIVVYSAII) threads the bilayer. Residues 49-307 (KKGYLFTEVP…IQTGTIGSFH (259 aa)) are Lumenal-facing. Residues 290–303 (RHGIRVIFIQTGTI) form a pore-forming motif region. A helical transmembrane segment spans residues 308–328 (FQTLLLTLVSGLGLLAVATTV). At 329-378 (VDQLAIRLLPQRKSYSSLKFQVTESMSNPMKKRITTDEGEDVLYTRIEGL) the chain is on the cytoplasmic side.

This sequence belongs to the P2X receptor family.

It localises to the contractile vacuole membrane. P2X receptors are ATP-gated ion channels that play a role in intracellular calcium signaling. Not required for the purinergic response to extracellular nucleotides. Inward currents evoked by intracellular ATP and ATP analogs. Exclusively selective for ATP over other nucleotides. Insensitive to P2 receptor antagonists PPADS, suramin and 2',3'-O-(2,4,6-trinitrophenyl)-ATP but inhibited by nanomolar concentrations of copper and sodium ion. More permeable to ammonium than either sodium or potassium ions and less permeable to choline. It has been reported that p2xA is not essential for osmoregulation, however this information is in contradiction with another source which indicates that p2xA is required for osmoregulation. Found to be permeable to chloride ions. Inhibited by copper and sodium ions. The polypeptide is P2X receptor A (p2xA) (Dictyostelium discoideum (Social amoeba)).